A 181-amino-acid polypeptide reads, in one-letter code: Cytochrome b6-f complex iron-sulfur subunit (181 aa).

Positions 1-35 are disordered; it reads MAQTGNFKSPARMSSLGQGAAPASSGAVTGGKPRE. 2 consecutive transmembrane segments (helical) span residues 53 to 73 and 114 to 134; these read VGGV…KYII and GGAL…VNWV. Residues 85 to 178 form the Rieske domain; it reads LTVGKASEVP…ARIEGDSIII (94 aa). [2Fe-2S] cluster-binding residues include cysteine 124, histidine 126, cysteine 142, and histidine 145. Cysteine 129 and cysteine 144 are disulfide-bonded.

Belongs to the Rieske iron-sulfur protein family. [2Fe-2S] cluster serves as cofactor.

The protein localises to the cell inner membrane. The catalysed reaction is 2 oxidized [plastocyanin] + a plastoquinol + 2 H(+)(in) = 2 reduced [plastocyanin] + a plastoquinone + 4 H(+)(out). Its function is as follows. Component of the green S-bacteria bc-complex which consists of the Rieske protein and cytochrome b subunit and which appears to lack a cytochrome c1-equivalent. This complex has a comparatively low redox potential. The sequence is that of Cytochrome b6-f complex iron-sulfur subunit (petC) from Chlorobaculum thiosulfatiphilum (Chlorobium limicola f.sp. thiosulfatophilum).